The primary structure comprises 723 residues: ATP-dependent DNA helicase RRM3 (723 aa).

Disordered stretches follow at residues 1-31 (MFRSHASGNKKQWSKRSSNGSTPAASASGSH) and 61-101 (DLES…DDDP). Ser64 carries the post-translational modification Phosphoserine. Residues 83 to 96 (NNSSSLFSQSQGSF) show a composition bias toward low complexity. 254 to 261 (GSAGTGKS) is a binding site for ATP. Residues 682–701 (QVYVALSRAVTMDTLQVLNF) mediate DNA binding.

The protein belongs to the helicase family. As to quaternary structure, interacts with DEF1 and POL30.

It is found in the nucleus. The protein localises to the chromosome. It localises to the telomere. The catalysed reaction is Couples ATP hydrolysis with the unwinding of duplex DNA at the replication fork by translocating in the 5'-3' direction. This creates two antiparallel DNA single strands (ssDNA). The leading ssDNA polymer is the template for DNA polymerase III holoenzyme which synthesizes a continuous strand.. It carries out the reaction ATP + H2O = ADP + phosphate + H(+). Its function is as follows. 5' to 3' DNA replicative helicase recruited to paused replisomes to promote fork progression throughout nonhistone protein-DNA complexes, naturally occurring impediments that are encountered in each S phase where replication forks pauses. Needed for normal fork progression through over 1000 discrete sites scattered throughout the genome, like rDNA, tRNA genes, centromeres, active replication origins, or transcriptional silencers. Required for timely replication of the telomere and subtelomeric DNA and for wild-type levels of telomeric silencing. Involved in regulation of Ty1 transposition and protects the genome from instability at nascent sites of retrotransposition. Involved in DNA repair during stalled replication fork, regulation of fragile sites expression and essential for genome stability. Also plays a role in mtDNA replication. Has G-quadruplex (G4) unwinding activity and can suppress G4-induced genome instability when PIF1 levels are low. This Saccharomyces cerevisiae (strain ATCC 204508 / S288c) (Baker's yeast) protein is ATP-dependent DNA helicase RRM3.